A 369-amino-acid polypeptide reads, in one-letter code: Probable dual-specificity RNA methyltransferase RlmN (369 aa).

Residue glutamate 106 is the Proton acceptor of the active site. The 237-residue stretch at 118–354 folds into the Radical SAM core domain; that stretch reads EARRLTVCVS…VTVRRSRGQD (237 aa). Residues cysteine 125 and cysteine 359 are joined by a disulfide bond. Residues cysteine 132, cysteine 136, and cysteine 139 each contribute to the [4Fe-4S] cluster site. S-adenosyl-L-methionine contacts are provided by residues 183–184, serine 215, 238–240, and asparagine 316; these read GE and SLH. Cysteine 359 acts as the S-methylcysteine intermediate in catalysis.

This sequence belongs to the radical SAM superfamily. RlmN family. [4Fe-4S] cluster serves as cofactor.

Its subcellular location is the cytoplasm. It catalyses the reaction adenosine(2503) in 23S rRNA + 2 reduced [2Fe-2S]-[ferredoxin] + 2 S-adenosyl-L-methionine = 2-methyladenosine(2503) in 23S rRNA + 5'-deoxyadenosine + L-methionine + 2 oxidized [2Fe-2S]-[ferredoxin] + S-adenosyl-L-homocysteine. The enzyme catalyses adenosine(37) in tRNA + 2 reduced [2Fe-2S]-[ferredoxin] + 2 S-adenosyl-L-methionine = 2-methyladenosine(37) in tRNA + 5'-deoxyadenosine + L-methionine + 2 oxidized [2Fe-2S]-[ferredoxin] + S-adenosyl-L-homocysteine. Specifically methylates position 2 of adenine 2503 in 23S rRNA and position 2 of adenine 37 in tRNAs. This is Probable dual-specificity RNA methyltransferase RlmN from Salinibacter ruber (strain DSM 13855 / M31).